The primary structure comprises 306 residues: MPNPLYRQHIISISDLSREQLECLLQTALKLKAHPRGDLLEGKLIGSCFFEPSTRTRLSFETAVQRLGGKVIGFSDGANTSAKKGETLADTARIISGYTDAIIQRHPKDGAARVAAEFSRVPVINAGDGTNQHPSQTLLDLVTIYETQGRLDKLKIAMAGDLKYGRTVHSLCQALKRWNCEFAFVSPPSLAMPDYITEELDEAGCRYRILGSLEEAAEWADILYMTRVQRERFDEQEFAKIQGKFNLEASMLARAKPNLRVLHPLPRVDEIHPDVDATPHAYYFEQATNGVYARMAILSLVLNEEV.

Carbamoyl phosphate is bound by residues Arg55 and Thr56. Residue Lys84 participates in L-aspartate binding. The carbamoyl phosphate site is built by Arg105, His133, and Gln136. Residues Arg166 and Arg227 each coordinate L-aspartate. The carbamoyl phosphate site is built by Leu265 and Pro266.

This sequence belongs to the aspartate/ornithine carbamoyltransferase superfamily. ATCase family. Heterododecamer (2C3:3R2) of six catalytic PyrB chains organized as two trimers (C3), and six regulatory PyrI chains organized as three dimers (R2).

The catalysed reaction is carbamoyl phosphate + L-aspartate = N-carbamoyl-L-aspartate + phosphate + H(+). Its pathway is pyrimidine metabolism; UMP biosynthesis via de novo pathway; (S)-dihydroorotate from bicarbonate: step 2/3. In terms of biological role, catalyzes the condensation of carbamoyl phosphate and aspartate to form carbamoyl aspartate and inorganic phosphate, the committed step in the de novo pyrimidine nucleotide biosynthesis pathway. The polypeptide is Aspartate carbamoyltransferase catalytic subunit (Neisseria meningitidis serogroup A / serotype 4A (strain DSM 15465 / Z2491)).